The following is a 205-amino-acid chain: Small ribosomal subunit protein uS4 (205 aa).

Basic and acidic residues predominate over residues 1 to 16 (MSKRESAKHKIDRRLG). A disordered region spans residues 1 to 46 (MSKRESAKHKIDRRLGENIWGRPKSPVNRREYGPGQHGQRRKGKLS). The region spanning 94–157 (SRLDAVVYRA…KQLAIVLEAV (64 aa)) is the S4 RNA-binding domain.

The protein belongs to the universal ribosomal protein uS4 family. In terms of assembly, part of the 30S ribosomal subunit. Contacts protein S5. The interaction surface between S4 and S5 is involved in control of translational fidelity.

Its function is as follows. One of the primary rRNA binding proteins, it binds directly to 16S rRNA where it nucleates assembly of the body of the 30S subunit. With S5 and S12 plays an important role in translational accuracy. This chain is Small ribosomal subunit protein uS4, found in Brucella abortus (strain S19).